Reading from the N-terminus, the 635-residue chain is 1-deoxy-D-xylulose-5-phosphate synthase (635 aa).

Thiamine diphosphate is bound by residues His-72 and 113–115 (GHA). Asp-144 is a Mg(2+) binding site. Residues 145–146 (GA), Asn-174, Tyr-286, and Glu-369 each bind thiamine diphosphate. Residue Asn-174 participates in Mg(2+) binding.

Belongs to the transketolase family. DXPS subfamily. Homodimer. The cofactor is Mg(2+). It depends on thiamine diphosphate as a cofactor.

The catalysed reaction is D-glyceraldehyde 3-phosphate + pyruvate + H(+) = 1-deoxy-D-xylulose 5-phosphate + CO2. Its pathway is metabolic intermediate biosynthesis; 1-deoxy-D-xylulose 5-phosphate biosynthesis; 1-deoxy-D-xylulose 5-phosphate from D-glyceraldehyde 3-phosphate and pyruvate: step 1/1. Functionally, catalyzes the acyloin condensation reaction between C atoms 2 and 3 of pyruvate and glyceraldehyde 3-phosphate to yield 1-deoxy-D-xylulose-5-phosphate (DXP). The polypeptide is 1-deoxy-D-xylulose-5-phosphate synthase (Acaryochloris marina (strain MBIC 11017)).